We begin with the raw amino-acid sequence, 376 residues long: Queuine tRNA-ribosyltransferase (376 aa).

Asp-92 functions as the Proton acceptor in the catalytic mechanism. Residues 92-96 (DSGGF), Asp-146, Gln-190, and Gly-217 contribute to the substrate site. The segment at 248–254 (GVGRPED) is RNA binding. Asp-267 acts as the Nucleophile in catalysis. Residues 272 to 276 (TRNAR) form an RNA binding; important for wobble base 34 recognition region. Zn(2+) contacts are provided by Cys-305, Cys-307, Cys-310, and His-337.

Belongs to the queuine tRNA-ribosyltransferase family. As to quaternary structure, homodimer. Within each dimer, one monomer is responsible for RNA recognition and catalysis, while the other monomer binds to the replacement base PreQ1. Zn(2+) serves as cofactor.

The enzyme catalyses 7-aminomethyl-7-carbaguanine + guanosine(34) in tRNA = 7-aminomethyl-7-carbaguanosine(34) in tRNA + guanine. The protein operates within tRNA modification; tRNA-queuosine biosynthesis. Its function is as follows. Catalyzes the base-exchange of a guanine (G) residue with the queuine precursor 7-aminomethyl-7-deazaguanine (PreQ1) at position 34 (anticodon wobble position) in tRNAs with GU(N) anticodons (tRNA-Asp, -Asn, -His and -Tyr). Catalysis occurs through a double-displacement mechanism. The nucleophile active site attacks the C1' of nucleotide 34 to detach the guanine base from the RNA, forming a covalent enzyme-RNA intermediate. The proton acceptor active site deprotonates the incoming PreQ1, allowing a nucleophilic attack on the C1' of the ribose to form the product. After dissociation, two additional enzymatic reactions on the tRNA convert PreQ1 to queuine (Q), resulting in the hypermodified nucleoside queuosine (7-(((4,5-cis-dihydroxy-2-cyclopenten-1-yl)amino)methyl)-7-deazaguanosine). This is Queuine tRNA-ribosyltransferase from Stenotrophomonas maltophilia (strain K279a).